A 248-amino-acid chain; its full sequence is Pyridoxine 5'-phosphate synthase (248 aa).

Asparagine 7 lines the 3-amino-2-oxopropyl phosphate pocket. 9–10 (DH) provides a ligand contact to 1-deoxy-D-xylulose 5-phosphate. Arginine 18 provides a ligand contact to 3-amino-2-oxopropyl phosphate. Histidine 52 functions as the Proton acceptor in the catalytic mechanism. 1-deoxy-D-xylulose 5-phosphate is bound by residues arginine 54 and histidine 59. Glutamate 79 acts as the Proton acceptor in catalysis. Residue threonine 109 participates in 1-deoxy-D-xylulose 5-phosphate binding. The active-site Proton donor is histidine 201. Residues glycine 202 and 223-224 (GH) contribute to the 3-amino-2-oxopropyl phosphate site.

It belongs to the PNP synthase family. In terms of assembly, homooctamer; tetramer of dimers.

It is found in the cytoplasm. The catalysed reaction is 3-amino-2-oxopropyl phosphate + 1-deoxy-D-xylulose 5-phosphate = pyridoxine 5'-phosphate + phosphate + 2 H2O + H(+). It functions in the pathway cofactor biosynthesis; pyridoxine 5'-phosphate biosynthesis; pyridoxine 5'-phosphate from D-erythrose 4-phosphate: step 5/5. Functionally, catalyzes the complicated ring closure reaction between the two acyclic compounds 1-deoxy-D-xylulose-5-phosphate (DXP) and 3-amino-2-oxopropyl phosphate (1-amino-acetone-3-phosphate or AAP) to form pyridoxine 5'-phosphate (PNP) and inorganic phosphate. This is Pyridoxine 5'-phosphate synthase from Opitutus terrae (strain DSM 11246 / JCM 15787 / PB90-1).